A 321-amino-acid polypeptide reads, in one-letter code: Nucleotide-binding protein GOX0815 (321 aa).

27 to 34 is a binding site for ATP; sequence GLSGAGKS. A GTP-binding site is contributed by 72-75; the sequence is DVRS.

Belongs to the RapZ-like family.

Its function is as follows. Displays ATPase and GTPase activities. The polypeptide is Nucleotide-binding protein GOX0815 (Gluconobacter oxydans (strain 621H) (Gluconobacter suboxydans)).